The following is a 379-amino-acid chain: Stimulator of interferon genes protein (379 aa).

The Cytoplasmic portion of the chain corresponds to 1–17; the sequence is MPHSSLHPSIPCPRGHG. The tract at residues 1 to 190 is mediates interaction with ZDHHC1 and ZDHHC11; sequence MPHSSLHPSI…TYNQHYNNLL (190 aa). A helical transmembrane segment spans residues 18 to 34; sequence AQKAALVLLSACLVTLW. A Glycyl lysine isopeptide (Lys-Gly) (interchain with G-Cter in ubiquitin) cross-link involves residue Lys-20. Residues 35-44 lie on the Lumenal side of the membrane; sequence GLGEPPEHTL. Residues 45–69 traverse the membrane as a helical segment; that stretch reads RYLVLHLASLQLGLLLNGVCSLAEE. Over 70–91 the chain is Cytoplasmic; the sequence is LRHIHSRYRGSYWRTVRACLGC. Residues Cys-88 and Cys-91 are each lipidated (S-palmitoyl cysteine). Residues 92 to 106 traverse the membrane as a helical segment; sequence PLRRGALLLLSIYFY. The Lumenal segment spans residues 107–116; it reads YSLPNAVGPP. The helical transmembrane segment at 117 to 134 threads the bilayer; it reads FTWMLALLGLSQALNILL. At 135 to 379 the chain is on the cytoplasmic side; sequence GLKGLAPAEI…KPLPLRTDFS (245 aa). Lys-150 participates in a covalent cross-link: Glycyl lysine isopeptide (Lys-Gly) (interchain with G-Cter in ubiquitin). The interval 153–340 is cyclic dinucleotide-binding domain (CBD); that stretch reads FNVAHGLAWS…RHLRQEEKEE (188 aa). Residues Ser-162 and Tyr-167 each coordinate 2',3'-cGAMP. Residues Ser-162 and Tyr-167 each contribute to the 3',3'-c-di-GMP site. Residue Tyr-167 coordinates 2',3'-cUAMP. Residue Thr-229 is modified to Phosphothreonine. Lys-236 is covalently cross-linked (Glycyl lysine isopeptide (Lys-Gly) (interchain with G-Cter in ubiquitin)). Residue Arg-238 participates in 2',3'-cGAMP binding. 2',3'-cUAMP is bound at residue Arg-238. 3',3'-c-di-GMP contacts are provided by residues 238–241 and Thr-263; that span reads RVYS. Ser-241 carries the phosphoserine modification. Thr-263 contacts 2',3'-cGAMP. Position 263 (Thr-263) interacts with 2',3'-cUAMP. Residue Lys-338 forms a Glycyl lysine isopeptide (Lys-Gly) (interchain with G-Cter in SUMO) linkage. A C-terminal tail (CTT) region spans residues 340–379; that stretch reads EVTVGSLKTSAVPSTSTMSQEPELLISGMEKPLPLRTDFS. Positions 341-370 are disordered; that stretch reads VTVGSLKTSAVPSTSTMSQEPELLISGMEK. Positions 345-359 are enriched in polar residues; it reads SLKTSAVPSTSTMSQ. Residue Thr-354 is modified to Phosphothreonine. Ser-355 carries the post-translational modification Phosphoserine; by MAP3K7. Thr-356 carries the post-translational modification Phosphothreonine. 2 positions are modified to phosphoserine; by TBK1: Ser-358 and Ser-366. A pLxIS motif motif is present at residues 363 to 366; the sequence is LLIS.

This sequence belongs to the STING family. As to quaternary structure, homodimer; forms a homodimer in absence of cyclic nucleotide (c-di-GMP or cGAMP); 'Lys-63'-linked ubiquitination at Lys-150 is required for homodimerization. Homotetramer; in presence of cyclic nucleotide (c-di-GMP or cGAMP), forms tetramers and higher-order oligomers through side-by-side packing. Interacts (when phosphorylated) with IRF3; following activation and phosphorylation on the pLxIS motif by TBK1, recruits IRF3. Interacts with RIGI, MAVS and SSR2. Interacts with RNF5 and TRIM56. Interacts with TBK1; when homodimer, leading to subsequent production of IFN-beta. Interacts with IFIT1 and IFIT2. Interacts with TRIM29; this interaction induces STING1 ubiquitination and subsequent degradation. Associates with the MHC-II complex. Interacts with STEEP1; interaction takes place upon cGAMP-activation and STING1 phosphorylation by MAP3K7/TAK1 and promotes STING1 translocation to COPII vesicles. Interacts with SEC24A, SEC24B, and SEC24C; promoting translocation to COPII vesicles. Interacts (when ubiquitinated) with SQSTM1; leading to relocalization to autophagosomes. Interacts with SURF4. Interacts with HNRNPA2B1. Interacts with ZDHHC1; ZDHHC1 constitutively interacts with STING1 and in presence of DNA viruses activates it by promoting its cGAMP-induced oligomerization and the recruitment of downstream signaling components. Interacts with ZDHHC11; in presence of DNA viruses promotes the recruitment of IRF3 to STING1. Interacts with TOMM70. Interacts with isoform IFI16-beta of IFI16. Interacts with TAB1; promoting recruitment of TAB1 to the endoplasmic reticulum membrane and subsequent activation of MAP3K7/TAK1. Interacts (via transmembrane domain) with TMEM203. Interacts with DDX41. Interacts with TMEM120A (via C-terminal domain); regulates the trafficking of STING1 from the ER to the ER-Golgi intermediate compartment to elicit antiviral effects. In terms of assembly, (Microbial infection) Interacts with human papillomavirus (HPV) protein E7. (Microbial infection) Interacts with adenovirus early E1A protein. As to quaternary structure, (Microbial infection) Interacts with herpes simplex virus 1 protein ICP34.5; this interaction inhibits the intracellular DNA sensing pathway. In terms of assembly, (Microbial infection) Interacts with Chikungunya virus non-structural protein 1; this interaction results in inhibition of cGAS-STING signaling and increased levels of palmitoylated nsP1 and protein stabilization. (Microbial infection) Interacts with human cytomegalovirus proteins UL94, UL42 and UL138; these interactions result in the inhibition of cGAS-STING signaling. As to quaternary structure, (Microbial infection) Interacts with varivella virus protein 39; this interaction results in the inhibition of cGAS-STING signaling. Post-translationally, phosphorylation by TBK1 leads to activation and production of IFN-beta. Following cyclic nucleotide (c-di-GMP or cGAMP)-binding, activation and translocation from the endoplasmic reticulum, STING1 is phosphorylated by TBK1 at Ser-366 in the pLxIS motif. The phosphorylated pLxIS motif constitutes an IRF3-binding motif, leading to recruitment of the transcription factor IRF3 to induce type-I interferons and other cytokines. The phosphorylated pLxIS motif facilitates SENP2 recruitment during late phase of viral infection. Phosphorylated on tyrosine residues upon MHC-II aggregation. Dephosphorylation by PPP6C leads to inactivation and decreased production of IFN-beta. Phosphorylation at Ser-358 is also required to activate IRF3. Phosphorylation at Ser-355 by MAP3K7/TAK1 facilitates its interaction with STEEP1, promoting STING1 translocation to COPII vesicles. Ubiquitinated. Ubiquitinated via 'Lys-63'-linked ubiquitin chains in response to double-stranded DNA treatment, leading to relocalization to autophagosomes and subsequent degradation; this process is dependent on SQSTM1. 'Lys-63'-linked ubiquitination mediated by TRIM56 at Lys-150 promotes homodimerization and recruitment of the antiviral kinase TBK1 and subsequent production of IFN-beta. 'Lys-48'-linked polyubiquitination at Lys-150 occurring after viral infection is mediated by RNF5 and leads to proteasomal degradation. 'Lys-11'-linked polyubiquitination at Lys-150 by RNF26 leads to stabilize STING1: it protects STING1 from RNF5-mediated 'Lys-48'-linked polyubiquitination. 'Lys-33'-linked and 'Lys-48'-linked deubiquitinated by USP20; leading to its stabilization and promotion of innate antiviral response. 'Lys-48'-linked deubiquitinated by USP44; leading to its stabilization and promotion of innate antiviral response. Deubiquitinated by USP13; leading to inhibition of innate antiviral response. 'Lys-63'-linked deubiquitinated by USP49; leading to inhibition of the subsequent recruitment of TBK1 to the signaling complex. 'Lys-63'-linked ubiquitination mediated by RNF39 promotes the activation of the cGAS-STING pathway. MARCHF5-mediated ubiquitination prevents the oxidation-induced polymer formation. In terms of processing, (Microbial infection) Deubiquitinated by Epstein-Barr virus BPLF1 on both 'Lys-48' and 'Lys-63'-linked ubiquitin chains; leading to inhibition of cGAS-STING signaling. Post-translationally, sumoylated at Lys-338 by TRIM38 during the early phase of viral infection, promoting its stability by preventing its relocalization to autophagosomes and subsequent degradation. Desumoylated by SENP2 during the late phase of viral infection. Palmitoylation takes place in the Golgi apparatus and creates a platform for the recruitment of TBK1. As to expression, ubiquitously expressed. Expressed in skin endothelial cells, alveolar type 2 pneumocytes, bronchial epithelium and alveolar macrophages.

It localises to the endoplasmic reticulum membrane. It is found in the cytoplasm. The protein localises to the perinuclear region. The protein resides in the endoplasmic reticulum-Golgi intermediate compartment membrane. Its subcellular location is the golgi apparatus membrane. It localises to the cytoplasmic vesicle. It is found in the autophagosome membrane. The protein localises to the mitochondrion outer membrane. The protein resides in the cell membrane. The catalysed reaction is H(+)(in) = H(+)(out). Its activity is regulated as follows. Activated upon binding to the hydrolysis-resistant 2'3'-cG(s)A(s)MP, an analog of cGAMP, in which phosphodiester linkages are replaced by phosphothioate linkages. Specifically inhibited by small-molecule H-151 (N-(4-ethylphenyl)-N'-1H-indol-3-yl-urea), which covalently binds Cys-91 and prevents palmitoylation and subsequent activation of STING1. In contrast to mouse protein, not activated by anticancer molecule 5,6-dimethylxanthenone 4-acetic acid (DMXAA). Inhibited by compound 18 ([(3S,4S)-2-(4-tert-butyl-3-chlorophenyl)-3-(2,3-dihydro-1,4-benzodioxin-6-yl)-7-fluoro-1-oxo-1,2,3,4-tetrahydroisoquinolin-4-yl]acetate), a competitive inhibitor with slow dissociation kinetics and good oral bioavailability. Homooligomerization and ability to promote the production of type I interferons is activated by C53, a small benzothiazinone-like compound that binds to the transmembrane regions. in the area of the putative pore. In contrast, compound C53, directly inhibits the proton channel activity and facilitate MAP1LC3B/LC3B lipidation and autophagosome formation. Functionally, facilitator of innate immune signaling that acts as a sensor of cytosolic DNA from bacteria and viruses and promotes the production of type I interferon (IFN-alpha and IFN-beta). Innate immune response is triggered in response to non-CpG double-stranded DNA from viruses and bacteria delivered to the cytoplasm. Acts by binding cyclic dinucleotides: recognizes and binds cyclic di-GMP (c-di-GMP), a second messenger produced by bacteria, cyclic UMP-AMP (2',3'-cUAMP), and cyclic GMP-AMP (cGAMP), a messenger produced by CGAS in response to DNA virus in the cytosol. Upon binding to c-di-GMP, cUAMP or cGAMP, STING1 oligomerizes, translocates from the endoplasmic reticulum and is phosphorylated by TBK1 on the pLxIS motif, leading to recruitment and subsequent activation of the transcription factor IRF3 to induce expression of type I interferon and exert a potent anti-viral state. Exhibits 2',3' phosphodiester linkage-specific ligand recognition: can bind both 2'-3' linked cGAMP (2'-3'-cGAMP) and 3'-3' linked cGAMP but is preferentially activated by 2'-3' linked cGAMP. The preference for 2'-3'-cGAMP, compared to other linkage isomers is probably due to the ligand itself, whichs adopts an organized free-ligand conformation that resembles the STING1-bound conformation and pays low energy costs in changing into the active conformation. In addition to promote the production of type I interferons, plays a direct role in autophagy. Following cGAMP-binding, STING1 buds from the endoplasmic reticulum into COPII vesicles, which then form the endoplasmic reticulum-Golgi intermediate compartment (ERGIC). The ERGIC serves as the membrane source for WIPI2 recruitment and LC3 lipidation, leading to formation of autophagosomes that target cytosolic DNA or DNA viruses for degradation by the lysosome. Promotes autophagy by acting as a proton channel that directs proton efflux from the Golgi to facilitate MAP1LC3B/LC3B lipidation. The autophagy- and interferon-inducing activities can be uncoupled and autophagy induction is independent of TBK1 phosphorylation. Autophagy is also triggered upon infection by bacteria: following c-di-GMP-binding, which is produced by live Gram-positive bacteria, promotes reticulophagy. May be involved in translocon function, the translocon possibly being able to influence the induction of type I interferons. May be involved in transduction of apoptotic signals via its association with the major histocompatibility complex class II (MHC-II). Its function is as follows. (Microbial infection) Antiviral activity is antagonized by oncoproteins, such as papillomavirus (HPV) protein E7 and adenovirus early E1A protein. Such oncoproteins prevent the ability to sense cytosolic DNA. This Homo sapiens (Human) protein is Stimulator of interferon genes protein.